Reading from the N-terminus, the 408-residue chain is NADH-quinone oxidoreductase subunit D (408 aa).

The protein belongs to the complex I 49 kDa subunit family. As to quaternary structure, NDH-1 is composed of 14 different subunits. Subunits NuoB, C, D, E, F, and G constitute the peripheral sector of the complex.

It is found in the cell inner membrane. It carries out the reaction a quinone + NADH + 5 H(+)(in) = a quinol + NAD(+) + 4 H(+)(out). In terms of biological role, NDH-1 shuttles electrons from NADH, via FMN and iron-sulfur (Fe-S) centers, to quinones in the respiratory chain. The immediate electron acceptor for the enzyme in this species is believed to be ubiquinone. Couples the redox reaction to proton translocation (for every two electrons transferred, four hydrogen ions are translocated across the cytoplasmic membrane), and thus conserves the redox energy in a proton gradient. This is NADH-quinone oxidoreductase subunit D from Campylobacter jejuni subsp. jejuni serotype O:23/36 (strain 81-176).